The following is a 555-amino-acid chain: Inorganic phosphate transporter 1-11 (555 aa).

At Met-1 to Ala-28 the chain is on the cytoplasmic side. The chain crosses the membrane as a helical span at residues Ile-29–Val-49. Over Ser-50–Asn-77 the chain is Extracellular. Residues Met-78–Gly-98 form a helical membrane-spanning segment. At Asp-99–Arg-105 the chain is on the cytoplasmic side. A helical transmembrane segment spans residues Val-106–Gly-126. Topologically, residues Ser-127 to Lys-130 are extracellular. The helical transmembrane segment at Ala-131–Tyr-151 threads the bilayer. At Pro-152 to Arg-167 the chain is on the cytoplasmic side. A helical membrane pass occupies residues Gly-168–Val-188. Topologically, residues Ser-189 to Pro-216 are extracellular. A helical transmembrane segment spans residues Ala-217–Phe-237. The Cytoplasmic portion of the chain corresponds to Tyr-238 to Arg-298. A helical membrane pass occupies residues His-299 to Ser-319. The Extracellular portion of the chain corresponds to Gln-320–Lys-351. A helical transmembrane segment spans residues Ala-352 to Ile-372. Topologically, residues Asp-373–Arg-377 are cytoplasmic. Residues Tyr-378–Leu-398 traverse the membrane as a helical segment. The Extracellular segment spans residues Tyr-399–Leu-408. Residues Phe-409–Phe-436 form a helical membrane-spanning segment. At Pro-437–Ser-442 the chain is on the cytoplasmic side. Residues Thr-443–Ile-463 form a helical membrane-spanning segment. Residues Gln-464–Lys-477 are Extracellular-facing. Residues Ala-478–Glu-498 form a helical membrane-spanning segment. The Cytoplasmic portion of the chain corresponds to Thr-499–Ala-555. A disordered region spans residues Glu-506–Ala-555. Residues Gly-512–Ala-521 show a composition bias toward gly residues. The segment covering Pro-522–Asp-535 has biased composition (low complexity). A compositionally biased stretch (polar residues) spans Ala-544–Ala-555.

Belongs to the major facilitator superfamily. Phosphate:H(+) symporter (TC 2.A.1.9) family.

It is found in the membrane. Its function is as follows. Symbiosis-specific regulated inorganic phosphate (Pi) transporter. Probably involved in symbiosis-mediated Pi uptake in roots colonized by myccorhizal fungi. This Oryza sativa subsp. japonica (Rice) protein is Inorganic phosphate transporter 1-11 (PHT1-11).